The following is an 859-amino-acid chain: Auxin response factor 2 (859 aa).

A disordered region spans residues 1 to 48; the sequence is MASSEVSMKGNRGGDNFSSSGFSDPKETRNVSVAGEGQKSNSTRSAAA. Positions 14–23 are enriched in low complexity; it reads GDNFSSSGFS. The TF-B3 DNA-binding region spans 164–266; sequence FCKTLTASDT…ELRVGVRRAM (103 aa). The segment covering 396 to 407 has biased composition (pro residues); the sequence is LAPPALSPVPMP. 3 disordered regions span residues 396 to 442, 687 to 736, and 829 to 859; these read LAPP…LPAS, IASP…RSCT, and RSEE…AGNS. Polar residues-rich tracts occupy residues 416 to 426 and 695 to 704; these read IAPSSPDSSML and LSDQSKGSKS. Positions 733-817 constitute a PB1 domain; sequence RSCTKVHKQG…RKIFIYTKEE (85 aa). Residues 847 to 859 are compositionally biased toward polar residues; it reads SASNPSLSSAGNS.

This sequence belongs to the ARF family. Homodimers and heterodimers. Interacts with ARF1. As to expression, expressed in the whole plant.

The protein localises to the nucleus. Its function is as follows. Auxin response factors (ARFs) are transcriptional factors that bind specifically to the DNA sequence 5'-TGTCTC-3' found in the auxin-responsive promoter elements (AuxREs). Could act as transcriptional activator or repressor. Formation of heterodimers with Aux/IAA proteins may alter their ability to modulate early auxin response genes expression. Promotes flowering, stamen development, floral organ abscission and fruit dehiscence. Functions independently of ethylene and cytokinin response pathways. May act as a repressor of cell division and organ growth. This chain is Auxin response factor 2 (ARF2), found in Arabidopsis thaliana (Mouse-ear cress).